The sequence spans 228 residues: ATP synthase F(0) complex subunit a (228 aa).

Helical transmembrane passes span 13–33, 70–90, 100–120, 140–160, 162–182, and 190–210; these read YFLGFPLMIFIAILISLTMFI, WALLLMTTLMFIFLNNITGLL, LSLNMAMAIPLWLGTIIMGAT, APFLIVIESISIIIRPLALGV, LTANITAGHLLIHLVSLALIN, and LFLTFSVFILLLILELAVSFI.

The protein belongs to the ATPase A chain family. Component of the ATP synthase complex composed at least of ATP5F1A/subunit alpha, ATP5F1B/subunit beta, ATP5MC1/subunit c (homooctomer), MT-ATP6/subunit a, MT-ATP8/subunit 8, ATP5ME/subunit e, ATP5MF/subunit f, ATP5MG/subunit g, ATP5MK/subunit k, ATP5MJ/subunit j, ATP5F1C/subunit gamma, ATP5F1D/subunit delta, ATP5F1E/subunit epsilon, ATP5PF/subunit F6, ATP5PB/subunit b, ATP5PD/subunit d, ATP5PO/subunit OSCP. ATP synthase complex consists of a soluble F(1) head domain (subunits alpha(3) and beta(3)) - the catalytic core - and a membrane F(0) domain - the membrane proton channel (subunits c, a, 8, e, f, g, k and j). These two domains are linked by a central stalk (subunits gamma, delta, and epsilon) rotating inside the F1 region and a stationary peripheral stalk (subunits F6, b, d, and OSCP). Interacts with DNAJC30; interaction is direct.

The protein resides in the mitochondrion inner membrane. The catalysed reaction is H(+)(in) = H(+)(out). Subunit a, of the mitochondrial membrane ATP synthase complex (F(1)F(0) ATP synthase or Complex V) that produces ATP from ADP in the presence of a proton gradient across the membrane which is generated by electron transport complexes of the respiratory chain. ATP synthase complex consist of a soluble F(1) head domain - the catalytic core - and a membrane F(1) domain - the membrane proton channel. These two domains are linked by a central stalk rotating inside the F(1) region and a stationary peripheral stalk. During catalysis, ATP synthesis in the catalytic domain of F(1) is coupled via a rotary mechanism of the central stalk subunits to proton translocation. With the subunit c (ATP5MC1), forms the proton-conducting channel in the F(0) domain, that contains two crucial half-channels (inlet and outlet) that facilitate proton movement from the mitochondrial intermembrane space (IMS) into the matrix. Protons are taken up via the inlet half-channel and released through the outlet half-channel, following a Grotthuss mechanism. The chain is ATP synthase F(0) complex subunit a from Myxine glutinosa (Atlantic hagfish).